A 153-amino-acid chain; its full sequence is Superoxide dismutase [Cu-Zn] (153 aa).

Cu cation-binding residues include His45, His47, and His62. Cys56 and Cys145 are disulfide-bonded. Positions 62, 70, 79, and 82 each coordinate Zn(2+). A Cu cation-binding site is contributed by His119.

Belongs to the Cu-Zn superoxide dismutase family. In terms of assembly, homodimer. Cu cation is required as a cofactor. Requires Zn(2+) as cofactor.

It localises to the cytoplasm. It catalyses the reaction 2 superoxide + 2 H(+) = H2O2 + O2. Its function is as follows. Destroys radicals which are normally produced within the cells and which are toxic to biological systems. The protein is Superoxide dismutase [Cu-Zn] (Sod) of Chymomyza amoena.